The chain runs to 360 residues: Peptide chain release factor 1 (360 aa).

N5-methylglutamine is present on glutamine 233. A disordered region spans residues 286 to 305; it reads NEIAQERKSQVGTGDRSERI.

Belongs to the prokaryotic/mitochondrial release factor family. Post-translationally, methylated by PrmC. Methylation increases the termination efficiency of RF1.

The protein resides in the cytoplasm. Peptide chain release factor 1 directs the termination of translation in response to the peptide chain termination codons UAG and UAA. In Acetivibrio thermocellus (strain ATCC 27405 / DSM 1237 / JCM 9322 / NBRC 103400 / NCIMB 10682 / NRRL B-4536 / VPI 7372) (Clostridium thermocellum), this protein is Peptide chain release factor 1.